Reading from the N-terminus, the 460-residue chain is DL-alanine permease SerP2 (460 aa).

A run of 12 helical transmembrane segments spans residues Leu-26–His-46, Leu-47–Leu-67, Phe-98–Ile-118, Phe-124–Leu-144, Phe-160–Phe-180, Phe-209–Thr-229, Gln-246–Tyr-266, Phe-278–Val-298, Ala-344–Ile-364, Phe-368–Ile-388, His-410–Phe-430, and Thr-433–Phe-453.

The protein belongs to the amino acid-polyamine-organocation (APC) superfamily. Amino acid transporter (AAT) (TC 2.A.3.1) family.

The protein localises to the cell membrane. In terms of biological role, transports DL-alanine, DL-serine and glycine. The preferred substrate is DL-alanine. L-serine is a low-affinity substrate. The sequence is that of DL-alanine permease SerP2 from Lactococcus lactis subsp. cremoris (strain MG1363).